Reading from the N-terminus, the 474-residue chain is UDP-N-acetylmuramate--L-alanine ligase (474 aa).

ATP is bound at residue 123–129; it reads GTHGKTT.

Belongs to the MurCDEF family.

The protein resides in the cytoplasm. The catalysed reaction is UDP-N-acetyl-alpha-D-muramate + L-alanine + ATP = UDP-N-acetyl-alpha-D-muramoyl-L-alanine + ADP + phosphate + H(+). Its pathway is cell wall biogenesis; peptidoglycan biosynthesis. In terms of biological role, cell wall formation. The chain is UDP-N-acetylmuramate--L-alanine ligase from Alcanivorax borkumensis (strain ATCC 700651 / DSM 11573 / NCIMB 13689 / SK2).